Consider the following 218-residue polypeptide: Ribose-5-phosphate isomerase A (218 aa).

Residues 28–31, 81–84, and 94–97 each bind substrate; these read TGST, DGAD, and KGGG. The Proton acceptor role is filled by Glu-103. A substrate-binding site is contributed by Lys-121.

The protein belongs to the ribose 5-phosphate isomerase family. As to quaternary structure, homodimer.

The enzyme catalyses aldehydo-D-ribose 5-phosphate = D-ribulose 5-phosphate. The protein operates within carbohydrate degradation; pentose phosphate pathway; D-ribose 5-phosphate from D-ribulose 5-phosphate (non-oxidative stage): step 1/1. In terms of biological role, catalyzes the reversible conversion of ribose-5-phosphate to ribulose 5-phosphate. The sequence is that of Ribose-5-phosphate isomerase A from Colwellia psychrerythraea (strain 34H / ATCC BAA-681) (Vibrio psychroerythus).